The sequence spans 299 residues: Acetylglutamate kinase (299 aa).

Residues 68-69 (GG), arginine 90, and asparagine 195 contribute to the substrate site.

It belongs to the acetylglutamate kinase family. ArgB subfamily.

The protein localises to the cytoplasm. The enzyme catalyses N-acetyl-L-glutamate + ATP = N-acetyl-L-glutamyl 5-phosphate + ADP. It functions in the pathway amino-acid biosynthesis; L-arginine biosynthesis; N(2)-acetyl-L-ornithine from L-glutamate: step 2/4. Catalyzes the ATP-dependent phosphorylation of N-acetyl-L-glutamate. The protein is Acetylglutamate kinase of Erythrobacter litoralis (strain HTCC2594).